A 399-amino-acid polypeptide reads, in one-letter code: Chorismate synthase (399 aa).

NADP(+)-binding residues include arginine 40 and arginine 46. FMN is bound by residues 129–131 (RSS), 257–258 (QA), glycine 302, 317–321 (KPISS), and arginine 343.

It belongs to the chorismate synthase family. Homotetramer. FMNH2 is required as a cofactor.

It carries out the reaction 5-O-(1-carboxyvinyl)-3-phosphoshikimate = chorismate + phosphate. Its pathway is metabolic intermediate biosynthesis; chorismate biosynthesis; chorismate from D-erythrose 4-phosphate and phosphoenolpyruvate: step 7/7. Its function is as follows. Catalyzes the anti-1,4-elimination of the C-3 phosphate and the C-6 proR hydrogen from 5-enolpyruvylshikimate-3-phosphate (EPSP) to yield chorismate, which is the branch point compound that serves as the starting substrate for the three terminal pathways of aromatic amino acid biosynthesis. This reaction introduces a second double bond into the aromatic ring system. This is Chorismate synthase from Chlorobium chlorochromatii (strain CaD3).